A 512-amino-acid chain; its full sequence is CaM kinase-like vesicle-associated protein (512 aa).

A Protein kinase domain is found at 24 to 286; the sequence is YDLGQVIKTE…AEEAISHEWI (263 aa). A disordered region spans residues 328–347; that stretch reads APEQSGTAATQSASDAATPG. Over residues 332-347 the composition is skewed to low complexity; the sequence is SGTAATQSASDAATPG. A Phosphoserine modification is found at S392. The tract at residues 393–512 is disordered; that stretch reads ADRSATPATD…AQESQRVETS (120 aa). The segment covering 398–439 has biased composition (polar residues); the sequence is TPATDGSATPATDGSVTPATDGSITPATDGSVTPATDRSATP. The residue at position 446 (T446) is a Phosphothreonine. Positions 449 to 460 are enriched in polar residues; sequence TEESTVPATQSS. Low complexity predominate over residues 461 to 478; that stretch reads ALPAAKAAATPEPAVAQP. T470 is subject to Phosphothreonine.

This sequence belongs to the protein kinase superfamily. CAMK Ser/Thr protein kinase family. As to quaternary structure, interacts with calmodulin, in the presence of calcium. It depends on Ca(2+) as a cofactor.

The protein localises to the cell membrane. The protein resides in the cytoplasmic vesicle membrane. Does not appear to have detectable kinase activity. The protein is CaM kinase-like vesicle-associated protein (Camkv) of Mus musculus (Mouse).